The sequence spans 368 residues: MSLYPIYNFSAGPAVLPEAVLETARQEMLDYNGTGFPVMAMSHRSEMFLSILHHAEQDLRQLLKVPDNYKILFLQGGATTQFNMAAMNLAHGFRTADAVVTGNWSRIAYEQMSRLTDTEIRLAAHGGEQFDYLDLPPVETWDVAPDSAFVHFAVNETVNGLQYREVPCLSEGMPPLVCDMSSEILSREFDVADYGLIYAGAQKNIGPAGVTVVIVREDLLERCPNDIPDVFNYRSHINRDGMYNTPSTYAIYMSGLVFRWLQAQGGVKKIEAVNRLKAQTLYETIDGSDGFYINRIRPNARSKMNVVFQTGDEELDRRFVLEAELQGLCLLKGYKTVGGMRASIYNAMPLEGVRALADFMRDFQRRYG.

Arginine 44 is an L-glutamate binding site. Pyridoxal 5'-phosphate-binding positions include alanine 78 to threonine 79, tryptophan 104, threonine 157, aspartate 179, and glutamine 202. N6-(pyridoxal phosphate)lysine is present on lysine 203. A pyridoxal 5'-phosphate-binding site is contributed by asparagine 244 to threonine 245.

The protein belongs to the class-V pyridoxal-phosphate-dependent aminotransferase family. SerC subfamily. Homodimer. Pyridoxal 5'-phosphate serves as cofactor.

The protein localises to the cytoplasm. The catalysed reaction is O-phospho-L-serine + 2-oxoglutarate = 3-phosphooxypyruvate + L-glutamate. It catalyses the reaction 4-(phosphooxy)-L-threonine + 2-oxoglutarate = (R)-3-hydroxy-2-oxo-4-phosphooxybutanoate + L-glutamate. The protein operates within amino-acid biosynthesis; L-serine biosynthesis; L-serine from 3-phospho-D-glycerate: step 2/3. It functions in the pathway cofactor biosynthesis; pyridoxine 5'-phosphate biosynthesis; pyridoxine 5'-phosphate from D-erythrose 4-phosphate: step 3/5. Catalyzes the reversible conversion of 3-phosphohydroxypyruvate to phosphoserine and of 3-hydroxy-2-oxo-4-phosphonooxybutanoate to phosphohydroxythreonine. This is Phosphoserine aminotransferase from Neisseria meningitidis serogroup B (strain ATCC BAA-335 / MC58).